The chain runs to 608 residues: Translation initiation factor RLI1 (608 aa).

4Fe-4S ferredoxin-type domains lie at 7–39 and 46–75; these read RIAIVSADKCKPKKCRQECKRSCPVVKTGKLCI and KIAFISEILCIGCGICVKKCPFDAIQIINL. ABC transporter domains are found at residues 70–320 and 345–568; these read IQII…FLDG and LQND…LKNL. Residue 110 to 117 participates in ATP binding; sequence GTNGIGKS. Ser349 bears the Phosphoserine mark. 385 to 392 provides a ligand contact to ATP; it reads GENGTGKT.

It belongs to the ABC transporter superfamily. ABCE family. In terms of assembly, component of the multifactor complex (MFC) composed of at least RLI1, the eIF2 subunit SUI2, TIF5/eIF5, and the eIF3 subunits PRT1, HCR1, NIP1, RPG1, TIF34 and TIF35. The complex associates with pre-initiation complexes. Interacts with the complex YAE1:LTO1; the complex bridges the interaction between the CIA complex and RLI1.

The protein resides in the cytoplasm. It is found in the nucleus. Its function is as follows. Component of the multifactor complex (MFC) involved in translation initiation. Required for the binding of MFC to the 40S ribosome. Required for the processing and nuclear export of the 60S and 40S ribosomal subunits. The protein is Translation initiation factor RLI1 (RLI1) of Saccharomyces cerevisiae (strain ATCC 204508 / S288c) (Baker's yeast).